The primary structure comprises 594 residues: RAS guanyl-releasing protein 2-B (594 aa).

The N-terminal Ras-GEF domain occupies 3–121 (SSDLDKGLTI…SLIDIESVPS (119 aa)). The Ras-GEF domain occupies 149-382 (DPAELAEHLT…YQLSLQREPR (234 aa)). Positions 377 to 403 (LQREPRARSTQTHAKSPPSPSPPLEEW) are disordered. EF-hand domains lie at 418-453 (HIEK…FPYL) and 455-482 (AFNE…ASSV). Residues aspartate 431, aspartate 433, aspartate 435, histidine 437, glutamate 442, aspartate 460, asparagine 462, aspartate 464, lysine 466, and glutamate 471 each contribute to the Ca(2+) site. A Phorbol-ester/DAG-type zinc finger spans residues 490-540 (IHNFAERTFLRPVSCQHCRNLILGIYKKGLKCKACGITCHKHCRDHLSIEC).

The protein belongs to the RASGRP family.

It localises to the cytoplasm. Its subcellular location is the cytosol. It is found in the cell membrane. The protein resides in the synapse. The protein localises to the synaptosome. Functions as a calcium- and DAG-regulated nucleotide exchange factor specifically activating Rap through the exchange of bound GDP for GTP. May function in cell aggregation and adhesion. The sequence is that of RAS guanyl-releasing protein 2-B (rasgrp2-b) from Xenopus laevis (African clawed frog).